Reading from the N-terminus, the 150-residue chain is Cytochrome c oxidase subunit 5A, mitochondrial (150 aa).

The N-terminal 41 residues, 1–41, are a transit peptide targeting the mitochondrion; the sequence is MLGAALRRCAVAATTRAGPRGLLHSARTPGPAAAIQSVRCX. Positions 2–17 match the SIFI-degron motif; it reads LGAALRRCAVAATTRA. N6-acetyllysine occurs at positions 87 and 113. T141 is subject to Phosphothreonine.

Belongs to the cytochrome c oxidase subunit 5A family. Component of the cytochrome c oxidase (complex IV, CIV), a multisubunit enzyme composed of 14 subunits. The complex is composed of a catalytic core of 3 subunits MT-CO1, MT-CO2 and MT-CO3, encoded in the mitochondrial DNA, and 11 supernumerary subunits COX4I, COX5A, COX5B, COX6A, COX6B, COX6C, COX7A, COX7B, COX7C, COX8 and NDUFA4, which are encoded in the nuclear genome. The complex exists as a monomer or a dimer and forms supercomplexes (SCs) in the inner mitochondrial membrane with NADH-ubiquinone oxidoreductase (complex I, CI) and ubiquinol-cytochrome c oxidoreductase (cytochrome b-c1 complex, complex III, CIII), resulting in different assemblies (supercomplex SCI(1)III(2)IV(1) and megacomplex MCI(2)III(2)IV(2)). Interacts with AFG1L. Interacts with RAB5IF. In response to mitochondrial stress, the precursor protein is ubiquitinated by the SIFI complex in the cytoplasm before mitochondrial import, leading to its degradation. Within the SIFI complex, UBR4 initiates ubiquitin chain that are further elongated or branched by KCMF1.

Its subcellular location is the mitochondrion inner membrane. It functions in the pathway energy metabolism; oxidative phosphorylation. Functionally, component of the cytochrome c oxidase, the last enzyme in the mitochondrial electron transport chain which drives oxidative phosphorylation. The respiratory chain contains 3 multisubunit complexes succinate dehydrogenase (complex II, CII), ubiquinol-cytochrome c oxidoreductase (cytochrome b-c1 complex, complex III, CIII) and cytochrome c oxidase (complex IV, CIV), that cooperate to transfer electrons derived from NADH and succinate to molecular oxygen, creating an electrochemical gradient over the inner membrane that drives transmembrane transport and the ATP synthase. Cytochrome c oxidase is the component of the respiratory chain that catalyzes the reduction of oxygen to water. Electrons originating from reduced cytochrome c in the intermembrane space (IMS) are transferred via the dinuclear copper A center (CU(A)) of subunit 2 and heme A of subunit 1 to the active site in subunit 1, a binuclear center (BNC) formed by heme A3 and copper B (CU(B)). The BNC reduces molecular oxygen to 2 water molecules using 4 electrons from cytochrome c in the IMS and 4 protons from the mitochondrial matrix. This is Cytochrome c oxidase subunit 5A, mitochondrial (COX5A) from Pan paniscus (Pygmy chimpanzee).